The chain runs to 268 residues: Small ribosomal subunit protein mS43 (268 aa).

The transit peptide at 1 to 23 (MLNTGLRKGLALSPITHLLKRCS) directs the protein to the mitochondrion.

This sequence belongs to the mitochondrion-specific ribosomal protein mS43 family. As to quaternary structure, component of the mitochondrial small ribosomal subunit (mt-SSU). Mature yeast 74S mitochondrial ribosomes consist of a small (37S) and a large (54S) subunit. The 37S small subunit contains a 15S ribosomal RNA (15S mt-rRNA) and at least 32 different proteins. The 54S large subunit contains a 21S rRNA (21S mt-rRNA) and at least 45 different proteins. mS43 forms a dimer with mS42, building a large protuberance adjacent to the mRNA channel exit in the mt-SSU body.

The protein localises to the mitochondrion. Its function is as follows. Component of the mitochondrial ribosome (mitoribosome), a dedicated translation machinery responsible for the synthesis of mitochondrial genome-encoded proteins, including at least some of the essential transmembrane subunits of the mitochondrial respiratory chain. The mitoribosomes are attached to the mitochondrial inner membrane and translation products are cotranslationally integrated into the membrane. The protein is Small ribosomal subunit protein mS43 of Schizosaccharomyces pombe (strain 972 / ATCC 24843) (Fission yeast).